Consider the following 377-residue polypeptide: Stimulator of interferon genes protein (377 aa).

The Cytoplasmic segment spans residues 1 to 21 (MRRAEENNGFGTIPKRRNQHT). Residues 22–42 (PFYASIGMIVVIIVAFTSYHI) form a helical membrane-spanning segment. Residues 43–57 (TSYGDDRNRAMRQYS) lie on the Extracellular side of the membrane. A helical transmembrane segment spans residues 58 to 80 (FTFSLAYLAFLVGELLRRCCLFA). Over 81-101 (EEYRHIETRYNGSLKKAIQTT) the chain is Cytoplasmic. Residues 102 to 122 (FSFGHNNVLFVASLLFFVVFV) traverse the membrane as a helical segment. The Extracellular portion of the chain corresponds to 123 to 154 (ASNDPNGSSSVIQGNSTAEPHTEMRQTSGWQG). The chain crosses the membrane as a helical span at residues 155-175 (LWGQFIISALLTPLVVHLLGL). Over 176–377 (RELSKVEESQ…LKDSELEIGG (202 aa)) the chain is Cytoplasmic. 2',3'-cGAMP is bound by residues tyrosine 206, arginine 272, 278–279 (RH), and threonine 303. Residues tyrosine 206, arginine 272, arginine 278, and 300 to 303 (EYAT) each bind 3',3'-c-di-GMP.

This sequence belongs to the TMEM173 family. Homodimer.

It is found in the endoplasmic reticulum membrane. Functionally, sensor of cytosolic DNA from bacteria and viruses that promotes autophagy. Acts by recognizing and binding cyclic GMP-AMP (cGAMP), a messenger produced by CGAS in response to DNA in the cytosol. Following cGAMP-binding, promotes the formation of autophagosomes, leading to target cytosolic DNA for degradation by the lysosome. Exhibits guanine base-specific ligand recognition. Binds 3'-3'linked cGAMP, 2'-3' linked cGAMP and 3'-3' linked c-di-GMP with much greater affinity as compared to 3'-3' linked c-di-AMP. Lacks the C-terminal tail (CTT) found in mammalian orthologs which is essential for interferon signaling. This chain is Stimulator of interferon genes protein, found in Nematostella vectensis (Starlet sea anemone).